A 545-amino-acid chain; its full sequence is MPNKKILVTCALPYANGPLHIGHMLEHIQADIWVRYQRMKNNEVYFICADDAHGTAIMLKSKQLNINPEIMIAKIQQEHYQDCCDFNISYNNYHSTHSEENYELLNSIYTKLKKSGFIKSRFISQLYDAQNNIFLPDRFIIGTCPKCRAHNQNGDNCDQCGAIYTPLDLINPKSAISGKSPIIKKSKHLFFDLPQFTKSLYTWIHSGVLQEETLHKVKEWFKLGLKEWDISRNEPYFGFKIPNTSSKYFYVWMDAPIGYMGTFKNLCKKNKNILFEDFWSINSKVELYHFIGKDITYFHSLFWPAILESCQYRKPTGIFVHGHVTLNGSKISKSKNNFINVRTYLSHLNSDYLRYYYATKLSSKINDIDLNFNDFMLKVNADIINKILNLASRNSNFITQYNYGYLSNSLENSNLYDFFIDAQYLIGKLFQQREFSEAMRKIMQLADKANQYIDKQAPWHIVKQHGIHNKNIALCIFSMGIQLFRVLVIYLKPVLPILSQYSEKFLNTRLSWNNINIPLTNHKINKFDIIFHRINTNQISSIINK.

Residues 13–23 (PYANGPLHIGH) carry the 'HIGH' region motif. Residues Cys144, Cys147, Cys157, and Cys160 each contribute to the Zn(2+) site. Residues 330-334 (KISKS) carry the 'KMSKS' region motif. Lys333 is an ATP binding site.

The protein belongs to the class-I aminoacyl-tRNA synthetase family. MetG type 1 subfamily. Monomer. Zn(2+) is required as a cofactor.

It is found in the cytoplasm. The enzyme catalyses tRNA(Met) + L-methionine + ATP = L-methionyl-tRNA(Met) + AMP + diphosphate. In terms of biological role, is required not only for elongation of protein synthesis but also for the initiation of all mRNA translation through initiator tRNA(fMet) aminoacylation. This Blochmanniella floridana protein is Methionine--tRNA ligase.